Reading from the N-terminus, the 95-residue chain is uncharacterized protein (95 aa).

Residues 29 to 53 (LVSTATCMAALFLRFKLIAWVAFIL) form a helical membrane-spanning segment.

It localises to the membrane. This is an uncharacterized protein from Schizosaccharomyces pombe (strain 972 / ATCC 24843) (Fission yeast).